The chain runs to 219 residues: Deoxyribose-phosphate aldolase (219 aa).

The active-site Proton donor/acceptor is Asp-92. Catalysis depends on Lys-154, which acts as the Schiff-base intermediate with acetaldehyde. Lys-183 functions as the Proton donor/acceptor in the catalytic mechanism.

This sequence belongs to the DeoC/FbaB aldolase family. DeoC type 1 subfamily.

The protein resides in the cytoplasm. The enzyme catalyses 2-deoxy-D-ribose 5-phosphate = D-glyceraldehyde 3-phosphate + acetaldehyde. It functions in the pathway carbohydrate degradation; 2-deoxy-D-ribose 1-phosphate degradation; D-glyceraldehyde 3-phosphate and acetaldehyde from 2-deoxy-alpha-D-ribose 1-phosphate: step 2/2. Functionally, catalyzes a reversible aldol reaction between acetaldehyde and D-glyceraldehyde 3-phosphate to generate 2-deoxy-D-ribose 5-phosphate. The sequence is that of Deoxyribose-phosphate aldolase from Dictyoglomus turgidum (strain DSM 6724 / Z-1310).